The sequence spans 887 residues: ABC transporter A family member 10 (887 aa).

7 helical membrane-spanning segments follow: residues 38 to 58 (GIQYIIVLVILHYTIPNVITL), 198 to 218 (YLYVIYLPLLFLFSLQQLLVT), 245 to 265 (IIIVQTITNVINILLVMVVLY), 277 to 297 (VMLFLQFLLYSFSMVAIGIIL), 309 to 329 (AISSFLLLILVGVSCFYQFYL), 335 to 355 (SSWLRSILFLFSPCAFGEFLY), and 376 to 396 (ISFLFLIIDIFLYFTIAWYIT). A compositionally biased stretch (low complexity) spans 443 to 469 (NNCNNNNTSPSSSSSSQSSPLNKPLLS). The segment at 443-474 (NNCNNNNTSPSSSSSSQSSPLNKPLLSGDSDD) is disordered. Residues 481-728 (IRLVNLKKTY…FNLGYILTIV (248 aa)) form the ABC transporter domain. Position 519–526 (519–526 (GQNGSGKT)) interacts with ATP. Residues 774-797 (NNNNNENNSNNSDGSSSSSDSSSS) show a composition bias toward low complexity. Positions 774 to 799 (NNNNNENNSNNSDGSSSSSDSSSSKD) are disordered.

The protein belongs to the ABC transporter superfamily. ABCA family.

The protein localises to the membrane. This is ABC transporter A family member 10 (abcA10) from Dictyostelium discoideum (Social amoeba).